The chain runs to 167 residues: ATP synthase subunit b (167 aa).

A helical membrane pass occupies residues 8-28 (AEAEFWVGAGLLIFLGIVFFG).

It belongs to the ATPase B chain family. As to quaternary structure, F-type ATPases have 2 components, F(1) - the catalytic core - and F(0) - the membrane proton channel. F(1) has five subunits: alpha(3), beta(3), gamma(1), delta(1), epsilon(1). F(0) has three main subunits: a(1), b(2) and c(10-14). The alpha and beta chains form an alternating ring which encloses part of the gamma chain. F(1) is attached to F(0) by a central stalk formed by the gamma and epsilon chains, while a peripheral stalk is formed by the delta and b chains.

The protein resides in the cell inner membrane. In terms of biological role, f(1)F(0) ATP synthase produces ATP from ADP in the presence of a proton or sodium gradient. F-type ATPases consist of two structural domains, F(1) containing the extramembraneous catalytic core and F(0) containing the membrane proton channel, linked together by a central stalk and a peripheral stalk. During catalysis, ATP synthesis in the catalytic domain of F(1) is coupled via a rotary mechanism of the central stalk subunits to proton translocation. Functionally, component of the F(0) channel, it forms part of the peripheral stalk, linking F(1) to F(0). The sequence is that of ATP synthase subunit b from Phenylobacterium zucineum (strain HLK1).